Reading from the N-terminus, the 310-residue chain is Dicarboxylate carrier UCP2 (310 aa).

Over 1–10 (MVGFRAGDVP) the chain is Mitochondrial intermembrane. A helical membrane pass occupies residues 11-32 (PTATVKFIGAGTAACIADLFTF). 3 Solcar repeats span residues 11–107 (PTAT…VKQF), 115–204 (AGIG…IKDA), and 213–298 (DDLP…LKRA). Topologically, residues 33 to 78 (PLDTAKVRLQIQGENKASTNMGRGPVKYRGVFGTISTMVRVEGPRS) are mitochondrial matrix. Residues 79–101 (LYSGLVAGLQRQMSFASVRIGLY) traverse the membrane as a helical segment. Over 102–120 (DSVKQFYTKGSDHAGIGSR) the chain is Mitochondrial intermembrane. The chain crosses the membrane as a helical span at residues 121–137 (LMAGCTTGAMAVAVAQP). Residues 138–181 (TDVLKVRFQAQVSAGASKRYHSTMDAYRTIAKEEGFRGLWKGTG) are Mitochondrial matrix-facing. Residues 182-198 (PNITRNAIVNCTELVTY) traverse the membrane as a helical segment. The Mitochondrial intermembrane portion of the chain corresponds to 199-215 (DLIKDALLKSSLMTDDL). Residues 216–235 (PCHFTSAFGAGFCTTIIASP) traverse the membrane as a helical segment. Over 236 to 269 (VDVVKTRYMNSAQGQYSSALNCAVAMLTKKGPKA) the chain is Mitochondrial matrix. A helical transmembrane segment spans residues 270-292 (FFKGFMPSFLRLGSWNVVMFVTY). The tract at residues 277-299 (SFLRLGSWNVVMFVTYEQLKRAM) is purine nucleotide binding. Over 293-310 (EQLKRAMMAARQNWHTPL) the chain is Mitochondrial intermembrane.

It belongs to the mitochondrial carrier (TC 2.A.29) family. As to quaternary structure, homotetramer. Adopts an asymmetrical dimer of dimers functional form.

The protein localises to the mitochondrion inner membrane. The enzyme catalyses L-aspartate(out) + phosphate(in) + H(+)(in) = L-aspartate(in) + phosphate(out) + H(+)(out). It catalyses the reaction oxaloacetate(out) + phosphate(in) + H(+)(in) = oxaloacetate(in) + phosphate(out) + H(+)(out). It carries out the reaction (S)-malate(out) + phosphate(in) + H(+)(in) = (S)-malate(in) + phosphate(out) + H(+)(out). The catalysed reaction is malonate(out) + phosphate(in) + H(+)(in) = malonate(in) + phosphate(out) + H(+)(out). The enzyme catalyses sulfate(out) + phosphate(in) + H(+)(in) = sulfate(in) + phosphate(out) + H(+)(out). It catalyses the reaction (S)-malate(out) = (S)-malate(in). It carries out the reaction L-aspartate(out) = L-aspartate(in). The catalysed reaction is phosphate(in) = phosphate(out). The enzyme catalyses chloride(in) = chloride(out). It catalyses the reaction H(+)(in) = H(+)(out). It carries out the reaction a long-chain fatty acid(out) = a long-chain fatty acid(in). Its function is as follows. UCP are mitochondrial transporter proteins that create proton leaks across the inner mitochondrial membrane, thus uncoupling oxidative phosphorylation from ATP synthesis. As a result, energy is dissipated in the form of heat. Antiporter that exports dicarboxylate intermediates of the Krebs cycle in exchange for phosphate plus a proton across the inner membrane of mitochondria, a process driven by mitochondrial motive force with an overall impact on glycolysis, glutaminolysis and glutathione-dependent redox balance. Continuous export of oxaloacetate and related four-carbon dicarboxylates from mitochondrial matrix into the cytosol negatively regulates the oxidation of acetyl-CoA substrates via the Krebs cycle, lowering the ATP/ADP ratio and reactive oxygen species (ROS) production. May mediate inducible proton entry into the mitochondrial matrix affecting ATP turnover as a protection mechanism against oxidative stress. The proton currents are most likely associated with fatty acid flipping across the inner membrane of mitochondria in a metabolic process regulated by free fatty acids and purine nucleotides. In Danio rerio (Zebrafish), this protein is Dicarboxylate carrier UCP2 (ucp2).